The primary structure comprises 204 residues: Large ribosomal subunit protein eL15 (204 aa).

The disordered stretch occupies residues 185-204 (GGSRRAAWKRKNREHMHRKR). Residues 190 to 204 (AAWKRKNREHMHRKR) show a composition bias toward basic residues.

The protein belongs to the eukaryotic ribosomal protein eL15 family.

In Drosophila melanogaster (Fruit fly), this protein is Large ribosomal subunit protein eL15 (RpL15).